The primary structure comprises 417 residues: 4-hydroxy-3-methylbut-2-en-1-yl diphosphate synthase (flavodoxin) (417 aa).

Residues Cys303, Cys306, Cys349, and Glu356 each contribute to the [4Fe-4S] cluster site.

The protein belongs to the IspG family. [4Fe-4S] cluster serves as cofactor.

The catalysed reaction is (2E)-4-hydroxy-3-methylbut-2-enyl diphosphate + oxidized [flavodoxin] + H2O + 2 H(+) = 2-C-methyl-D-erythritol 2,4-cyclic diphosphate + reduced [flavodoxin]. It participates in isoprenoid biosynthesis; isopentenyl diphosphate biosynthesis via DXP pathway; isopentenyl diphosphate from 1-deoxy-D-xylulose 5-phosphate: step 5/6. Functionally, converts 2C-methyl-D-erythritol 2,4-cyclodiphosphate (ME-2,4cPP) into 1-hydroxy-2-methyl-2-(E)-butenyl 4-diphosphate. In Mesorhizobium japonicum (strain LMG 29417 / CECT 9101 / MAFF 303099) (Mesorhizobium loti (strain MAFF 303099)), this protein is 4-hydroxy-3-methylbut-2-en-1-yl diphosphate synthase (flavodoxin).